We begin with the raw amino-acid sequence, 172 residues long: uncharacterized protein (172 aa).

Positions 1 to 29 (MKKKQVMLALTAAAGLGLTALHSAPAAKA) are cleaved as a signal peptide. SH3b domains follow at residues 42–105 (SDTY…MKTA) and 112–172 (KQTA…LQMR).

This is an uncharacterized protein from Bacillus subtilis (strain 168).